We begin with the raw amino-acid sequence, 457 residues long: Chromosomal replication initiator protein DnaA (457 aa).

The tract at residues 1 to 90 (MAVSLWQQCI…RPSAKPQAPA (90 aa)) is domain I, interacts with DnaA modulators. Positions 79 to 120 (GSRPSAKPQAPAPAAVKAAAPQPKPGNSFVSQPEPAVSNHRS) are disordered. Positions 84–99 (AKPQAPAPAAVKAAAP) are enriched in low complexity. A domain II region spans residues 91–120 (PAAVKAAAPQPKPGNSFVSQPEPAVSNHRS). The tract at residues 121 to 337 (NINPTYQFDN…GALNRVIANA (217 aa)) is domain III, AAA+ region. ATP is bound by residues G165, G167, K168, and T169. The segment at 338–457 (NFTGRPITID…YANLIRTLSS (120 aa)) is domain IV, binds dsDNA.

This sequence belongs to the DnaA family. Oligomerizes as a right-handed, spiral filament on DNA at oriC.

The protein localises to the cytoplasm. Its function is as follows. Plays an essential role in the initiation and regulation of chromosomal replication. ATP-DnaA binds to the origin of replication (oriC) to initiate formation of the DNA replication initiation complex once per cell cycle. Binds the DnaA box (a 9 base pair repeat at the origin) and separates the double-stranded (ds)DNA. Forms a right-handed helical filament on oriC DNA; dsDNA binds to the exterior of the filament while single-stranded (ss)DNA is stabiized in the filament's interior. The ATP-DnaA-oriC complex binds and stabilizes one strand of the AT-rich DNA unwinding element (DUE), permitting loading of DNA polymerase. After initiation quickly degrades to an ADP-DnaA complex that is not apt for DNA replication. Binds acidic phospholipids. This Shewanella amazonensis (strain ATCC BAA-1098 / SB2B) protein is Chromosomal replication initiator protein DnaA.